Consider the following 292-residue polypeptide: Homoserine kinase (292 aa).

Position 84–94 (Pro84–Ala94) interacts with ATP.

Belongs to the GHMP kinase family. Homoserine kinase subfamily.

It localises to the cytoplasm. It carries out the reaction L-homoserine + ATP = O-phospho-L-homoserine + ADP + H(+). It functions in the pathway amino-acid biosynthesis; L-threonine biosynthesis; L-threonine from L-aspartate: step 4/5. Catalyzes the ATP-dependent phosphorylation of L-homoserine to L-homoserine phosphate. This is Homoserine kinase from Campylobacter jejuni subsp. jejuni serotype O:23/36 (strain 81-176).